The chain runs to 158 residues: Protein Smg homolog (158 aa).

The protein belongs to the Smg family.

In Coxiella burnetii (strain Dugway 5J108-111), this protein is Protein Smg homolog.